We begin with the raw amino-acid sequence, 618 residues long: UvrABC system protein C (618 aa).

The GIY-YIG domain occupies 13–92 (DKPGVYLMKN…IKKYRPKYNI (80 aa)). The region spanning 204–239 (LDIVENFKLNMEKAAENLEFEKAAMLRDKINIIEKI) is the UVR domain.

It belongs to the UvrC family. Interacts with UvrB in an incision complex.

The protein localises to the cytoplasm. In terms of biological role, the UvrABC repair system catalyzes the recognition and processing of DNA lesions. UvrC both incises the 5' and 3' sides of the lesion. The N-terminal half is responsible for the 3' incision and the C-terminal half is responsible for the 5' incision. The polypeptide is UvrABC system protein C (Clostridium botulinum (strain ATCC 19397 / Type A)).